A 405-amino-acid polypeptide reads, in one-letter code: Arginine biosynthesis bifunctional protein ArgJ (405 aa).

Over residues 1–18 (MTSADKNNPDTSTAQGSS) the composition is skewed to polar residues. Residues 1 to 21 (MTSADKNNPDTSTAQGSSADL) form a disordered region. Positions 167, 189, 200, 281, 400, and 405 each coordinate substrate. Residue Thr200 is the Nucleophile of the active site.

This sequence belongs to the ArgJ family. In terms of assembly, heterotetramer of two alpha and two beta chains.

It localises to the cytoplasm. The catalysed reaction is N(2)-acetyl-L-ornithine + L-glutamate = N-acetyl-L-glutamate + L-ornithine. It carries out the reaction L-glutamate + acetyl-CoA = N-acetyl-L-glutamate + CoA + H(+). Its pathway is amino-acid biosynthesis; L-arginine biosynthesis; L-ornithine and N-acetyl-L-glutamate from L-glutamate and N(2)-acetyl-L-ornithine (cyclic): step 1/1. The protein operates within amino-acid biosynthesis; L-arginine biosynthesis; N(2)-acetyl-L-ornithine from L-glutamate: step 1/4. In terms of biological role, catalyzes two activities which are involved in the cyclic version of arginine biosynthesis: the synthesis of N-acetylglutamate from glutamate and acetyl-CoA as the acetyl donor, and of ornithine by transacetylation between N(2)-acetylornithine and glutamate. This is Arginine biosynthesis bifunctional protein ArgJ from Corynebacterium jeikeium (strain K411).